Here is a 412-residue protein sequence, read N- to C-terminus: Dihydrolipoyllysine-residue acetyltransferase component of pyruvate dehydrogenase complex (412 aa).

Residues 2–78 (PIKILMPALS…PVNSLIAVLS (77 aa)) enclose the Lipoyl-binding domain. Position 43 is an N6-lipoyllysine (Lys-43). The Peripheral subunit-binding (PSBD) domain maps to 132 to 169 (FASPLAKRLAKMRNIRFESVKGSGPHGRIVKQDILSYT). Residue His-385 is part of the active site.

The protein belongs to the 2-oxoacid dehydrogenase family. In terms of assembly, forms a 24-polypeptide structural core with octahedral symmetry. (R)-lipoate is required as a cofactor.

It carries out the reaction N(6)-[(R)-dihydrolipoyl]-L-lysyl-[protein] + acetyl-CoA = N(6)-[(R)-S(8)-acetyldihydrolipoyl]-L-lysyl-[protein] + CoA. The pyruvate dehydrogenase complex catalyzes the overall conversion of pyruvate to acetyl-CoA and CO(2). It contains multiple copies of three enzymatic components: pyruvate dehydrogenase (E1), dihydrolipoamide acetyltransferase (E2) and lipoamide dehydrogenase (E3). This chain is Dihydrolipoyllysine-residue acetyltransferase component of pyruvate dehydrogenase complex (pdhC), found in Rickettsia conorii (strain ATCC VR-613 / Malish 7).